The following is a 394-amino-acid chain: Serine palmitoyltransferase (394 aa).

Pyridoxal 5'-phosphate-binding positions include 111–112 (GF), Ser183, His211, and Thr239. Position 242 is an N6-(pyridoxal phosphate)lysine (Lys242).

This sequence belongs to the class-II pyridoxal-phosphate-dependent aminotransferase family. It depends on pyridoxal 5'-phosphate as a cofactor.

It carries out the reaction L-serine + hexadecanoyl-CoA + H(+) = 3-oxosphinganine + CO2 + CoA. It functions in the pathway lipid metabolism; sphingolipid metabolism. Functionally, involved in de novo bacterial ceramide synthesis. Catalyzes the condensation of L-serine with palmitoyl-CoA (hexadecanoyl-CoA) to produce 3-oxosphinganine. Also capable of using alanine as substrate leading to the formation of 1-deoxysphinganine (1-deoxySa). Contributes to the levels of endogenous sphingolipids in its host. The polypeptide is Serine palmitoyltransferase (Bacteroides ovatus (strain ATCC 8483 / DSM 1896 / JCM 5824 / BCRC 10623 / CCUG 4943 / NCTC 11153)).